The following is a 150-amino-acid chain: D-aminoacyl-tRNA deacylase (150 aa).

The Gly-cisPro motif, important for rejection of L-amino acids motif lies at 133-134 (GP).

Belongs to the DTD family. As to quaternary structure, homodimer.

Its subcellular location is the cytoplasm. It carries out the reaction glycyl-tRNA(Ala) + H2O = tRNA(Ala) + glycine + H(+). It catalyses the reaction a D-aminoacyl-tRNA + H2O = a tRNA + a D-alpha-amino acid + H(+). In terms of biological role, an aminoacyl-tRNA editing enzyme that deacylates mischarged D-aminoacyl-tRNAs. Also deacylates mischarged glycyl-tRNA(Ala), protecting cells against glycine mischarging by AlaRS. Acts via tRNA-based rather than protein-based catalysis; rejects L-amino acids rather than detecting D-amino acids in the active site. By recycling D-aminoacyl-tRNA to D-amino acids and free tRNA molecules, this enzyme counteracts the toxicity associated with the formation of D-aminoacyl-tRNA entities in vivo and helps enforce protein L-homochirality. This is D-aminoacyl-tRNA deacylase from Micrococcus luteus (strain ATCC 4698 / DSM 20030 / JCM 1464 / CCM 169 / CCUG 5858 / IAM 1056 / NBRC 3333 / NCIMB 9278 / NCTC 2665 / VKM Ac-2230) (Micrococcus lysodeikticus).